We begin with the raw amino-acid sequence, 535 residues long: Doublesex- and mab-3-related transcription factor A2 (535 aa).

Positions 69–116 form a DNA-binding region, DM; that stretch reads CARCRNHGVVSALKGHKRYCRWKDCLCAKCTLIAERQRVMAAQVALRR. The interval 200-315 is disordered; that stretch reads LQAGRPGSPQ…GGPGPRQRTP (116 aa). The DMA domain occupies 313–348; the sequence is RTPLDILTRVFPGHRRGVLELVLQGCGGDVVQAIEQ.

Belongs to the DMRT family.

The protein resides in the nucleus. In terms of biological role, may be involved in sexual development. This Bos taurus (Bovine) protein is Doublesex- and mab-3-related transcription factor A2 (DMRTA2).